The following is a 353-amino-acid chain: Paraneoplastic antigen Ma1 homolog (353 aa).

This sequence belongs to the PNMA family. Predominantly expressed in testis. Very low levels in the brain, including in the piriform cortex, hippocampus and some subcortical nuclei.

Its subcellular location is the nucleus. The protein localises to the nucleolus. This Mus musculus (Mouse) protein is Paraneoplastic antigen Ma1 homolog (Pnma1).